Consider the following 110-residue polypeptide: U1-lycotoxin-Ls1hh (110 aa).

Residues 1–20 (MKFVLLFGVLLVTLFSYSSA) form the signal peptide. The propeptide occupies 21 to 44 (EMLDDFDQADEDELLSLIEKEEAR). Cystine bridges form between C47-C62, C54-C71, C61-C89, and C73-C87.

It belongs to the neurotoxin 19 (CSTX) family. 03 subfamily. Expressed by the venom gland.

It is found in the secreted. This Lycosa singoriensis (Wolf spider) protein is U1-lycotoxin-Ls1hh.